The chain runs to 171 residues: Probable deoxyuridine 5'-triphosphate nucleotidohydrolase (171 aa).

Belongs to the dCTP deaminase family. Archaeal dUTPase subfamily.

The enzyme catalyses dUTP + H2O = dUMP + diphosphate + H(+). It functions in the pathway pyrimidine metabolism; dUMP biosynthesis; dUMP from dCTP (dUTP route): step 2/2. This enzyme is involved in nucleotide metabolism: it produces dUMP, the immediate precursor of thymidine nucleotides and it decreases the intracellular concentration of dUTP so that uracil cannot be incorporated into DNA. This chain is Probable deoxyuridine 5'-triphosphate nucleotidohydrolase, found in Methanosarcina barkeri (strain Fusaro / DSM 804).